A 488-amino-acid chain; its full sequence is Glycogen synthase (488 aa).

Arg20 is a binding site for ADP-alpha-D-glucose.

This sequence belongs to the glycosyltransferase 1 family. Bacterial/plant glycogen synthase subfamily.

It carries out the reaction [(1-&gt;4)-alpha-D-glucosyl](n) + ADP-alpha-D-glucose = [(1-&gt;4)-alpha-D-glucosyl](n+1) + ADP + H(+). It functions in the pathway glycan biosynthesis; glycogen biosynthesis. Functionally, synthesizes alpha-1,4-glucan chains using ADP-glucose. The sequence is that of Glycogen synthase from Chlorobaculum tepidum (strain ATCC 49652 / DSM 12025 / NBRC 103806 / TLS) (Chlorobium tepidum).